The following is a 380-amino-acid chain: Cytochrome b (380 aa).

A run of 4 helical transmembrane segments spans residues 33-53, 77-98, 113-133, and 178-198; these read FGSL…FLAM, WLIR…FIHV, WNIG…GYVL, and FFAF…VHLL. The heme b site is built by H83 and H97. Heme b-binding residues include H182 and H196. Residue H201 participates in a ubiquinone binding. 4 consecutive transmembrane segments (helical) span residues 226–246, 288–308, 320–340, and 347–367; these read IKDL…VLFF, LGGV…PLLN, ITQV…XXXX, and XXXX…IFMP.

This sequence belongs to the cytochrome b family. In terms of assembly, the cytochrome bc1 complex contains 11 subunits: 3 respiratory subunits (MT-CYB, CYC1 and UQCRFS1), 2 core proteins (UQCRC1 and UQCRC2) and 6 low-molecular weight proteins (UQCRH/QCR6, UQCRB/QCR7, UQCRQ/QCR8, UQCR10/QCR9, UQCR11/QCR10 and a cleavage product of UQCRFS1). This cytochrome bc1 complex then forms a dimer. Requires heme b as cofactor.

The protein localises to the mitochondrion inner membrane. In terms of biological role, component of the ubiquinol-cytochrome c reductase complex (complex III or cytochrome b-c1 complex) that is part of the mitochondrial respiratory chain. The b-c1 complex mediates electron transfer from ubiquinol to cytochrome c. Contributes to the generation of a proton gradient across the mitochondrial membrane that is then used for ATP synthesis. This is Cytochrome b (MT-CYB) from Rhipidomys leucodactylus (White-footed climbing mouse).